A 229-amino-acid polypeptide reads, in one-letter code: Indole-3-glycerol phosphate synthase (229 aa).

This sequence belongs to the TrpC family.

The catalysed reaction is 1-(2-carboxyphenylamino)-1-deoxy-D-ribulose 5-phosphate + H(+) = (1S,2R)-1-C-(indol-3-yl)glycerol 3-phosphate + CO2 + H2O. It functions in the pathway amino-acid biosynthesis; L-tryptophan biosynthesis; L-tryptophan from chorismate: step 4/5. This is Indole-3-glycerol phosphate synthase from Pyrococcus abyssi (strain GE5 / Orsay).